Consider the following 2224-residue polypeptide: Coagulation factor V (2224 aa).

An N-terminal signal peptide occupies residues 1 to 28; that stretch reads MFPGCPRLWVLVVLGTSWVGWGSQGTEA. Plastocyanin-like domains lie at 30-193, 203-329, 348-526, and 536-684; these read QLRQ…LLIC, TQKT…IKNC, KRWE…LLIC, and IQRA…DVKC. F5/8 type A domains are found at residues 30 to 329 and 348 to 684; these read QLRQ…IKNC and KRWE…DVKC. Residues Asn-51 and Asn-55 are each glycosylated (N-linked (GlcNAc...) asparagine). Ca(2+) contacts are provided by Asp-139 and Asp-140. Cysteines 167 and 193 form a disulfide. Asn-239, Asn-297, Asn-382, Asn-460, and Asn-468 each carry an N-linked (GlcNAc...) asparagine glycan. Cys-248 and Cys-329 are oxidised to a cystine. Cys-500 and Cys-526 are oxidised to a cystine. A glycan (N-linked (GlcNAc...) asparagine) is linked at Asn-554. A disulfide bridge connects residues Cys-603 and Cys-684. Phosphothreonine is present on Thr-640. Residues 692–1573 form a b region; that stretch reads SYEIFEPPES…PDNIAAWYLR (882 aa). Sulfotyrosine is present on residues Tyr-693, Tyr-724, and Tyr-726. Residues 738 to 1573 constitute a propeptide, activation peptide (connecting region); sequence SFRNSSLNQE…PDNIAAWYLR (836 aa). N-linked (GlcNAc...) asparagine glycans are attached at residues Asn-741, Asn-752, Asn-760, Asn-776, and Asn-782. A glycan (O-linked (GalNAc...) threonine) is linked at Thr-805. The N-linked (GlcNAc...) asparagine glycan is linked to Asn-821. Residues 822–831 are compositionally biased toward polar residues; that stretch reads SSTAEHSSPY. The interval 822–842 is disordered; the sequence is SSTAEHSSPYSEDPIEDPLQP. Residue Ser-859 is modified to Phosphoserine; by FAM20C. Residues 894 to 927 are disordered; it reads LSQDTGSPSGMRPWEDLPSQDTGSPSRMRPWKDP. Tandem repeats lie at residues 895–911 and 912–928. The tract at residues 895 to 928 is 2 X 17 AA tandem repeats; it reads SQDTGSPSGMRPWEDLPSQDTGSPSRMRPWKDPP. Asn-938 and Asn-977 each carry an N-linked (GlcNAc...) asparagine glycan. 2 disordered regions span residues 982 to 1001 and 1029 to 1048; these read WGES…HPKF and TRKK…PRTF. Residues 1029 to 1040 show a composition bias toward basic residues; sequence TRKKKKEKHTHH. Asn-1074, Asn-1083, Asn-1103, and Asn-1106 each carry an N-linked (GlcNAc...) asparagine glycan. The interval 1097 to 1157 is disordered; it reads LPDHNQNSSN…SSSPELSEML (61 aa). The segment covering 1099 to 1111 has biased composition (polar residues); it reads DHNQNSSNDTGQA. Low complexity predominate over residues 1139–1154; the sequence is HSTSDPSHRSSSPELS. 35 tandem repeats follow at residues 1185–1193, 1194–1202, 1203–1211, 1212–1220, 1221–1229, 1230–1238, 1239–1247, 1248–1256, 1257–1265, 1266–1274, 1275–1283, 1284–1292, 1293–1301, 1302–1310, 1311–1319, 1320–1328, 1329–1337, 1338–1346, 1347–1355, 1356–1364, 1365–1373, 1374–1382, 1383–1391, 1392–1400, 1401–1409, 1410–1418, 1419–1427, 1428–1436, 1437–1445, 1446–1454, 1455–1463, 1464–1472, 1473–1481, 1482–1490, and 1493–1501. The interval 1185–1501 is 35 X 9 AA approximate tandem repeats of [TNP]-L-S-P-D-L-S-Q-T; that stretch reads VISPDLSQVT…SPSSPTLNDT (317 aa). The interval 1341-1367 is disordered; sequence PELSQTNLSPALGQMPLSPDPSHTTLS. Residue Asn-1479 is glycosylated (N-linked (GlcNAc...) asparagine). A glycan (N-linked (GlcNAc...) asparagine) is linked at Asn-1499. 3 positions are modified to sulfotyrosine: Tyr-1522, Tyr-1538, and Tyr-1543. Asn-1559 carries N-linked (GlcNAc...) asparagine glycosylation. Plastocyanin-like domains follow at residues 1578–1751 and 1761–1907; these read NRRN…LLIC and NMPM…DRDC. Residues 1578–1907 form the F5/8 type A 3 domain; it reads NRRNYYIAAE…TPFLIMDRDC (330 aa). Tyr-1593 is subject to Sulfotyrosine. Asn-1703 carries N-linked (GlcNAc...) asparagine glycosylation. Cys-1725 and Cys-1751 form a disulfide bridge. Residues His-1843 and His-1845 each contribute to the Cu cation site. Intrachain disulfides connect Cys-1907–Cys-2061 and Cys-2066–Cys-2221. F5/8 type C domains follow at residues 1907–2061 and 2066–2221; these read CRMP…LQGC and CSTP…LFGC. Asn-2010 and Asn-2209 each carry an N-linked (GlcNAc...) asparagine glycan.

Belongs to the multicopper oxidase family. In terms of assembly, factor Va, the activated form of factor V, is composed of a heavy chain and a light chain, non-covalently bound. The interaction between the two chains is calcium-dependent. Forms heterodimer with SERPINA5. Thrombin activates factor V proteolytically to the active cofactor, factor Va (formation of a heavy chain at the N-terminus and a light chain at the C-terminus). Post-translationally, sulfation is required for efficient thrombin cleavage and activation and for full procoagulant activity. In terms of processing, activated protein C inactivates factor V and factor Va by proteolytic degradation. Phosphorylated by FAM20C in the extracellular medium. In terms of tissue distribution, plasma.

It localises to the secreted. Its activity is regulated as follows. Inhibited by SERPINA5. Central regulator of hemostasis. It serves as a critical cofactor for the prothrombinase activity of factor Xa that results in the activation of prothrombin to thrombin. The chain is Coagulation factor V (F5) from Homo sapiens (Human).